The chain runs to 34 residues: NTDPEQCKVMCYAQRHSSPELLRRCLDNCEKEHD.

Intrachain disulfides connect C7–C29 and C11–C25.

It localises to the secreted. Its function is as follows. Inhibits trypsin. The chain is Trypsin inhibitor from Veronica hederifolia (Ivy-leaved speedwell).